Consider the following 245-residue polypeptide: Probable transcriptional regulatory protein BF2589 (245 aa).

Residues 225-245 (EDEDVQNVYTNMKPADNEGEE) form a disordered region.

The protein belongs to the TACO1 family.

The protein resides in the cytoplasm. This is Probable transcriptional regulatory protein BF2589 from Bacteroides fragilis (strain ATCC 25285 / DSM 2151 / CCUG 4856 / JCM 11019 / LMG 10263 / NCTC 9343 / Onslow / VPI 2553 / EN-2).